The following is a 349-amino-acid chain: 4-hydroxy-3-methylbut-2-en-1-yl diphosphate synthase (flavodoxin) (349 aa).

The [4Fe-4S] cluster site is built by cysteine 265, cysteine 268, cysteine 300, and glutamate 307.

The protein belongs to the IspG family. Requires [4Fe-4S] cluster as cofactor.

It carries out the reaction (2E)-4-hydroxy-3-methylbut-2-enyl diphosphate + oxidized [flavodoxin] + H2O + 2 H(+) = 2-C-methyl-D-erythritol 2,4-cyclic diphosphate + reduced [flavodoxin]. The protein operates within isoprenoid biosynthesis; isopentenyl diphosphate biosynthesis via DXP pathway; isopentenyl diphosphate from 1-deoxy-D-xylulose 5-phosphate: step 5/6. In terms of biological role, converts 2C-methyl-D-erythritol 2,4-cyclodiphosphate (ME-2,4cPP) into 1-hydroxy-2-methyl-2-(E)-butenyl 4-diphosphate. This chain is 4-hydroxy-3-methylbut-2-en-1-yl diphosphate synthase (flavodoxin), found in Thermodesulfovibrio yellowstonii (strain ATCC 51303 / DSM 11347 / YP87).